A 912-amino-acid chain; its full sequence is Effector protein hopAE1 (912 aa).

A compositionally biased stretch (polar residues) spans 1–13 (MMPSQITRSSHSS). Residues 1 to 32 (MMPSQITRSSHSSLPEVAPASGDATGVSEQTP) are disordered.

The protein belongs to the HopW family.

Its subcellular location is the secreted. The chain is Effector protein hopAE1 (hopAE1) from Pseudomonas savastanoi pv. phaseolicola (strain 1448A / Race 6) (Pseudomonas syringae pv. phaseolicola (strain 1448A / Race 6)).